Consider the following 240-residue polypeptide: Sugar fermentation stimulation protein homolog (240 aa).

This sequence belongs to the SfsA family.

The sequence is that of Sugar fermentation stimulation protein homolog from Methanothermobacter thermautotrophicus (strain ATCC 29096 / DSM 1053 / JCM 10044 / NBRC 100330 / Delta H) (Methanobacterium thermoautotrophicum).